The chain runs to 530 residues: Autoinducer-2 kinase (530 aa).

The protein belongs to the FGGY kinase family.

The protein localises to the cytoplasm. The enzyme catalyses (S)-4,5-dihydroxypentane-2,3-dione + ATP = (2S)-2-hydroxy-3,4-dioxopentyl phosphate + ADP + H(+). Functionally, catalyzes the phosphorylation of autoinducer-2 (AI-2) to phospho-AI-2, which subsequently inactivates the transcriptional regulator LsrR and leads to the transcription of the lsr operon. Phosphorylates the ring-open form of (S)-4,5-dihydroxypentane-2,3-dione (DPD), which is the precursor to all AI-2 signaling molecules, at the C5 position. The polypeptide is Autoinducer-2 kinase (Yersinia pseudotuberculosis serotype O:1b (strain IP 31758)).